Here is a 311-residue protein sequence, read N- to C-terminus: Protoheme IX farnesyltransferase (311 aa).

8 consecutive transmembrane segments (helical) span residues 39-59 (LLAM…PIGE), 61-81 (LPEI…AGAF), 111-131 (ALVL…VASP), 133-153 (AALF…MWSK), 162-182 (IGSV…SGDL), 187-207 (IIGL…AIAI), 246-266 (FFFV…SLIW), and 287-307 (FVFS…FSLL).

This sequence belongs to the UbiA prenyltransferase family. Protoheme IX farnesyltransferase subfamily. As to quaternary structure, interacts with CtaA.

It localises to the cell membrane. The catalysed reaction is heme b + (2E,6E)-farnesyl diphosphate + H2O = Fe(II)-heme o + diphosphate. It functions in the pathway porphyrin-containing compound metabolism; heme O biosynthesis; heme O from protoheme: step 1/1. In terms of biological role, converts heme B (protoheme IX) to heme O by substitution of the vinyl group on carbon 2 of heme B porphyrin ring with a hydroxyethyl farnesyl side group. This Shouchella clausii (strain KSM-K16) (Alkalihalobacillus clausii) protein is Protoheme IX farnesyltransferase.